Reading from the N-terminus, the 326-residue chain is Vitamin B12 import system permease protein BtuC (326 aa).

Helical transmembrane passes span 15–35, 61–81, 88–108, 112–132, 146–166, 184–204, 240–260, 274–294, and 302–322; these read WLLCLSVLMLLALLLSLCAGE, LAVLLVGAALAISGAVMQALF, PGLLGVSNGAGVGLIAAVLLG, LPNWALGLCAIAGALIITLIL, LLAGVALGIICSALMTWAIYF, GGVDWRQSWLMLALIPVLLWI, GWMVGVSVALAGAIGFIGLVI, VLLPGCALAGASALLLADVVA, and ELPIGVVTATLGAPVFIWLLL.

Belongs to the binding-protein-dependent transport system permease family. FecCD subfamily. As to quaternary structure, the complex is composed of two ATP-binding proteins (BtuD), two transmembrane proteins (BtuC) and a solute-binding protein (BtuF).

It is found in the cell inner membrane. In terms of biological role, part of the ABC transporter complex BtuCDF involved in vitamin B12 import. Involved in the translocation of the substrate across the membrane. The chain is Vitamin B12 import system permease protein BtuC from Escherichia coli O8 (strain IAI1).